The following is an 80-amino-acid chain: Serine rich endogenous peptide 18 (80 aa).

The N-terminal stretch at 1 to 25 is a signal peptide; the sequence is MYNVVVCLLTLSFLLLTGLSNTAEA. Residues 45–59 carry the SCOOP motif motif; it reads KAEVGGSCSPHAHGR. The segment at 50–80 is disordered; the sequence is GSCSPHAHGRGPPNRPGSSNIPGSPKRCTKP. Residues 51 to 53 carry the SxS motif essential for MIK2 binding motif; the sequence is SCS.

Belongs to the serine rich endogenous peptide (SCOOP) phytocytokine family. In terms of assembly, interacts with MIK2 (via extracellular leucine-rich repeat domain); this interaction triggers the formation of complex between MIK2 and the BAK1/SERK3 and SERK4 coreceptors, and subsequent BAK1 activation by phosphorylation.

The protein localises to the cell membrane. The protein resides in the secreted. It localises to the extracellular space. It is found in the apoplast. Brassicaceae-specific phytocytokine (plant endogenous peptide released into the apoplast) perceived by MIK2 in a BAK1/SERK3 and SERK4 coreceptors-dependent manner, that modulates various physiological and antimicrobial processes including growth prevention and reactive oxygen species (ROS) response regulation. The sequence is that of Serine rich endogenous peptide 18 from Arabidopsis thaliana (Mouse-ear cress).